Consider the following 362-residue polypeptide: Diphosphomevalonate decarboxylase (362 aa).

(R)-5-diphosphomevalonate contacts are provided by residues 17 to 20 (YWGK), arginine 72, 150 to 155 (SGSACR), and threonine 206.

The protein belongs to the diphosphomevalonate decarboxylase family. As to quaternary structure, homodimer.

The catalysed reaction is (R)-5-diphosphomevalonate + ATP = isopentenyl diphosphate + ADP + phosphate + CO2. The protein operates within isoprenoid biosynthesis; isopentenyl diphosphate biosynthesis via mevalonate pathway; isopentenyl diphosphate from (R)-mevalonate: step 3/3. Its function is as follows. Diphosphomevalonate decarboxylase; part of the second module of ergosterol biosynthesis pathway that includes the middle steps of the pathway. MVD1 converts diphosphomevalonate into isopentenyl diphosphate. The second module is carried out in the vacuole and involves the formation of farnesyl diphosphate, which is also an important intermediate in the biosynthesis of ubiquinone, dolichol, heme and prenylated proteins. Activity by the mevalonate kinase ERG12 first converts mevalonate into 5-phosphomevalonate. 5-phosphomevalonate is then further converted to 5-diphosphomevalonate by the phosphomevalonate kinase ERG8. The diphosphomevalonate decarboxylase MVD then produces isopentenyl diphosphate. The isopentenyl-diphosphate delta-isomerase IDI1 then catalyzes the 1,3-allylic rearrangement of the homoallylic substrate isopentenyl (IPP) to its highly electrophilic allylic isomer, dimethylallyl diphosphate (DMAPP). Finally the farnesyl diphosphate synthase ERG20 catalyzes the sequential condensation of isopentenyl pyrophosphate with dimethylallyl pyrophosphate, and then with the resultant geranylpyrophosphate to the ultimate product farnesyl pyrophosphate. This is Diphosphomevalonate decarboxylase from Candida albicans (strain SC5314 / ATCC MYA-2876) (Yeast).